A 240-amino-acid polypeptide reads, in one-letter code: DISARM protein DrmC (240 aa).

One can recognise a PLD phosphodiesterase domain in the interval 174-201 (GYSSLHAKVIMVDEEKAFVSSANLSYNG). Active-site residues include His179, Lys181, and Asp186.

This sequence belongs to the phospholipase D family.

Its subcellular location is the cytoplasm. Its function is as follows. Component of antiviral defense system DISARM (defense island system associated with restriction-modification), composed of DrmE, DrmA, DrmB, DrmC and DrmMII. DISARM is probably a multi-gene restriction module, this subunit is probably a phospholipase or nuclease. Expression of DISARM in B.subtilis (strain BEST7003) confers resistance to phages Nf, phi29, phi105, phi3T, SPO1, SPR and SPP1. Protection is over 10(7)-fold against phi3T, 10(4)-10(5)-fold against Nf, phi29, phi105 and SPR, 100-fold against SPO1 and 10-fold against SPP1. DISARM does not interfere with phage adsorption, but instead interferes with (phi3T) DNA replication early in its cycle, preventing replication, circularization and lysogeny and probably causes phage DNA degradation (DNA is degraded in SPP1-infected cells). This is DISARM protein DrmC from Bacillus paralicheniformis (strain ATCC 9945a / NCIMB 11709 / CD-2).